A 211-amino-acid polypeptide reads, in one-letter code: Uracil phosphoribosyltransferase (211 aa).

5-phospho-alpha-D-ribose 1-diphosphate contacts are provided by residues Arg-78, Arg-103, and 130-138 (DPMLATGGT). Uracil contacts are provided by residues Ile-196 and 201 to 203 (GDA). Asp-202 serves as a coordination point for 5-phospho-alpha-D-ribose 1-diphosphate.

This sequence belongs to the UPRTase family. Mg(2+) serves as cofactor.

The catalysed reaction is UMP + diphosphate = 5-phospho-alpha-D-ribose 1-diphosphate + uracil. Its pathway is pyrimidine metabolism; UMP biosynthesis via salvage pathway; UMP from uracil: step 1/1. With respect to regulation, allosterically activated by GTP. Functionally, catalyzes the conversion of uracil and 5-phospho-alpha-D-ribose 1-diphosphate (PRPP) to UMP and diphosphate. This Kineococcus radiotolerans (strain ATCC BAA-149 / DSM 14245 / SRS30216) protein is Uracil phosphoribosyltransferase.